Here is a 244-residue protein sequence, read N- to C-terminus: Probable transcriptional regulatory protein Dgeo_2194 (244 aa).

A disordered region spans residues 1-21 (MAGHSKWAQIKRKKGANDKKR).

It belongs to the TACO1 family.

It is found in the cytoplasm. This chain is Probable transcriptional regulatory protein Dgeo_2194, found in Deinococcus geothermalis (strain DSM 11300 / CIP 105573 / AG-3a).